The sequence spans 67 residues: Alpha-conotoxin-like Qc1.1b (67 aa).

The N-terminal stretch at 1 to 21 (MGMRMMFTMFLLVVLAITVVS) is a signal peptide. Positions 22-46 (FTSDHASDGRNTAANDKASKLMALR) are excised as a propeptide. Disulfide bonds link Cys-49/Cys-55 and Cys-50/Cys-63. Residues 51 to 53 (DNP) are lacks the Ser-Xaa-Pro motif that is crucial for potent interaction with nAChR.

Belongs to the conotoxin A superfamily. Expressed by the venom duct.

Its subcellular location is the secreted. Its function is as follows. Alpha-conotoxins act on postsynaptic membranes, they bind to the nicotinic acetylcholine receptors (nAChR) and thus inhibit them. Has possibly a distinct nAChR binding mode from other alpha-conotoxins, due to a different three residue motif (lacks the Ser-Xaa-Pro motif). This Conus quercinus (Oak cone) protein is Alpha-conotoxin-like Qc1.1b.